We begin with the raw amino-acid sequence, 197 residues long: dTTP/UTP pyrophosphatase (197 aa).

Aspartate 70 serves as the catalytic Proton acceptor.

This sequence belongs to the Maf family. YhdE subfamily. It depends on a divalent metal cation as a cofactor.

Its subcellular location is the cytoplasm. The enzyme catalyses dTTP + H2O = dTMP + diphosphate + H(+). It carries out the reaction UTP + H2O = UMP + diphosphate + H(+). Nucleoside triphosphate pyrophosphatase that hydrolyzes dTTP and UTP. May have a dual role in cell division arrest and in preventing the incorporation of modified nucleotides into cellular nucleic acids. In Escherichia coli O6:K15:H31 (strain 536 / UPEC), this protein is dTTP/UTP pyrophosphatase (yceF2).